A 304-amino-acid chain; its full sequence is Cell surface-binding protein OPG105 (304 aa).

The Alpha-carbonic anhydrase domain maps to Met-1–Gly-235. Over Met-1–Thr-275 the chain is Virion surface. Residues Phe-276–Met-294 form a helical membrane-spanning segment. Over Ser-295–Asn-304 the chain is Intravirion.

Belongs to the alpha-carbonic anhydrase family. In terms of assembly, homodimer; disulfide-linked. Apparently non-glycosylated.

It localises to the virion membrane. Functionally, binds to chondroitin sulfate on the cell surface to provide virion attachment to target cell. This Bos taurus (Bovine) protein is Cell surface-binding protein OPG105 (OPG105).